Reading from the N-terminus, the 124-residue chain is Large ribosomal subunit protein uL18 (124 aa).

The protein belongs to the universal ribosomal protein uL18 family. In terms of assembly, part of the 50S ribosomal subunit; part of the 5S rRNA/L5/L18/L25 subcomplex. Contacts the 5S and 23S rRNAs.

This is one of the proteins that bind and probably mediate the attachment of the 5S RNA into the large ribosomal subunit, where it forms part of the central protuberance. The polypeptide is Large ribosomal subunit protein uL18 (Aquifex pyrophilus).